Consider the following 187-residue polypeptide: Elongation factor P (187 aa).

The protein belongs to the elongation factor P family.

The protein localises to the cytoplasm. It functions in the pathway protein biosynthesis; polypeptide chain elongation. In terms of biological role, involved in peptide bond synthesis. Stimulates efficient translation and peptide-bond synthesis on native or reconstituted 70S ribosomes in vitro. Probably functions indirectly by altering the affinity of the ribosome for aminoacyl-tRNA, thus increasing their reactivity as acceptors for peptidyl transferase. This chain is Elongation factor P, found in Brachyspira hyodysenteriae (strain ATCC 49526 / WA1).